A 716-amino-acid chain; its full sequence is Polyribonucleotide nucleotidyltransferase (716 aa).

Residues Asp490 and Asp496 each coordinate Mg(2+). The KH domain maps to Pro556–Ile615. The S1 motif domain occupies Gly625–Lys693. A disordered region spans residues Val695–Ala716. The segment covering Gln704–Ala716 has biased composition (basic and acidic residues).

Belongs to the polyribonucleotide nucleotidyltransferase family. Requires Mg(2+) as cofactor.

It localises to the cytoplasm. The enzyme catalyses RNA(n+1) + phosphate = RNA(n) + a ribonucleoside 5'-diphosphate. Involved in mRNA degradation. Catalyzes the phosphorolysis of single-stranded polyribonucleotides processively in the 3'- to 5'-direction. The sequence is that of Polyribonucleotide nucleotidyltransferase from Cereibacter sphaeroides (strain KD131 / KCTC 12085) (Rhodobacter sphaeroides).